The primary structure comprises 292 residues: 11-beta-hydroxysteroid dehydrogenase 1 (292 aa).

The Cytoplasmic segment spans residues 1 to 7 (MAFMKKY). The chain crosses the membrane as a helical; Signal-anchor for type II membrane protein span at residues 8-24 (LLPILGLFMAYYYYSAN). The Lumenal portion of the chain corresponds to 25 to 292 (EEFRPEMLQG…SYNMDRFINK (268 aa)). Residues 41-67 (GASK…TARS), 92-93 (TM), and 119-121 (NHI) contribute to the NADP(+) site. Asn123 and Asn162 each carry an N-linked (GlcNAc...) asparagine glycan. Ser170 is a binding site for substrate. Tyr183 functions as the Proton acceptor in the catalytic mechanism. NADP(+) is bound at residue 183 to 187 (YSASK). Residue Asn207 is glycosylated (N-linked (GlcNAc...) asparagine). 218–222 (IDTET) contributes to the NADP(+) binding site.

Belongs to the short-chain dehydrogenases/reductases (SDR) family. Homodimer. Glycosylated. In terms of tissue distribution, widely expressed, highest expression in liver, lower in testis, ovary, lung, foreskin fibroblasts, and much lower in kidney. Expressed in liver (at protein level). Expressed in the basal cells of the corneal epithelium and in the ciliary nonpigmented epithelium (both at mRNA and at protein level).

It localises to the endoplasmic reticulum membrane. The catalysed reaction is an 11beta-hydroxysteroid + NADP(+) = an 11-oxosteroid + NADPH + H(+). It catalyses the reaction cortisone + NADPH + H(+) = cortisol + NADP(+). The enzyme catalyses corticosterone + NADP(+) = 11-dehydrocorticosterone + NADPH + H(+). It carries out the reaction a 7beta-hydroxysteroid + NADP(+) = a 7-oxosteroid + NADPH + H(+). The catalysed reaction is 7-oxocholesterol + NADPH + H(+) = 7beta-hydroxycholesterol + NADP(+). It catalyses the reaction chenodeoxycholate + NADP(+) = 7-oxolithocholate + NADPH + H(+). The enzyme catalyses 7-oxolithocholate + NADPH + H(+) = ursodeoxycholate + NADP(+). It carries out the reaction glycochenodeoxycholate + NADP(+) = 7-oxoglycolithocholate + NADPH + H(+). The catalysed reaction is taurochenodeoxycholate + NADP(+) = 7-oxotaurolithocholate + NADPH + H(+). It catalyses the reaction tauroursodeoxycholate + NADP(+) = 7-oxotaurolithocholate + NADPH + H(+). The enzyme catalyses glycoursodeoxycholate + NADP(+) = 7-oxoglycolithocholate + NADPH + H(+). It carries out the reaction 7-oxopregnenolone + NADPH + H(+) = 7beta-hydroxypregnenolone + NADP(+). The catalysed reaction is 3beta,7alpha-dihydroxyandrost-5-en-17-one + NADP(+) = 3beta-hydroxy-5-androstene-7,17-dione + NADPH + H(+). It catalyses the reaction 3beta-hydroxy-5-androstene-7,17-dione + NADPH + H(+) = 3beta,7beta-dihydroxyandrost-5-en-17-one + NADP(+). The enzyme catalyses 3beta-hydroxy-5alpha-androstane-7,17-dione + NADPH + H(+) = 3beta,7beta-dihydroxy-5alpha-androstan-17-one + NADP(+). It functions in the pathway steroid metabolism. Hexose-6-phosphate dehydrogenase (H6PD) provides cosubstrate NADPH, and the glucose-6-phosphate transporter in the ER-membrane supplies the substrate for H6PDH, their activities stimulate the reduction of cortisone and abolish the oxidation of cortisol. Controls the reversible conversion of biologically active glucocorticoids such as cortisone to cortisol, and 11-dehydrocorticosterone to corticosterone in the presence of NADP(H). Participates in the corticosteroid receptor-mediated anti-inflammatory response, as well as metabolic and homeostatic processes. Plays a role in the secretion of aqueous humor in the eye, maintaining a normotensive, intraocular environment. Bidirectional in vitro, predominantly functions as a reductase in vivo, thereby increasing the concentration of active glucocorticoids. It has broad substrate specificity, besides glucocorticoids, it accepts other steroid and sterol substrates. Interconverts 7-oxo- and 7-hydroxy-neurosteroids such as 7-oxopregnenolone and 7beta-hydroxypregnenolone, 7-oxodehydroepiandrosterone (3beta-hydroxy-5-androstene-7,17-dione) and 7beta-hydroxydehydroepiandrosterone (3beta,7beta-dihydroxyandrost-5-en-17-one), among others. Catalyzes the stereo-specific conversion of the major dietary oxysterol, 7-ketocholesterol (7-oxocholesterol), into the more polar 7-beta-hydroxycholesterol metabolite. 7-oxocholesterol is one of the most important oxysterols, it participates in several events such as induction of apoptosis, accumulation in atherosclerotic lesions, lipid peroxidation, and induction of foam cell formation. Mediates the 7-oxo reduction of 7-oxolithocholate mainly to chenodeoxycholate, and to a lesser extent to ursodeoxycholate, both in its free form and when conjugated to glycine or taurine, providing a link between glucocorticoid activation and bile acid metabolism. Catalyzes the synthesis of 7-beta-25-dihydroxycholesterol from 7-oxo-25-hydroxycholesterol in vitro, which acts as a ligand for the G-protein-coupled receptor (GPCR) Epstein-Barr virus-induced gene 2 (EBI2) and may thereby regulate immune cell migration. The protein is 11-beta-hydroxysteroid dehydrogenase 1 of Homo sapiens (Human).